Reading from the N-terminus, the 113-residue chain is Putative membrane protein insertion efficiency factor (113 aa).

Belongs to the UPF0161 family.

Its subcellular location is the cell inner membrane. Functionally, could be involved in insertion of integral membrane proteins into the membrane. The sequence is that of Putative membrane protein insertion efficiency factor from Campylobacter jejuni subsp. jejuni serotype O:23/36 (strain 81-176).